The primary structure comprises 400 residues: SEC14-like protein 3 (400 aa).

Residues 76–249 (PPEVIQKYMP…HFGGTLTDPD (174 aa)) form the CRAL-TRIO domain. At Ser-223 the chain carries Phosphoserine. The GOLD domain maps to 275-383 (KTQYEHSVQI…AKKVSFTVEV (109 aa)).

The N-terminus seems to be blocked. In terms of tissue distribution, detected in a layer of supportive cells in olfactory epithelium, in the apical region of the trachea and in the surface layer of ciliated bronchial epithelium in the lung.

In terms of biological role, probable hydrophobic ligand-binding protein; may play a role in the transport of hydrophobic ligands like tocopherol, squalene and phospholipids. In Rattus norvegicus (Rat), this protein is SEC14-like protein 3 (Sec14l3).